An 82-amino-acid polypeptide reads, in one-letter code: Ice-structuring protein A (82 aa).

The first 23 residues, 1-23 (MALSLFTVGQLIFLFWTMRITEA), serve as a signal peptide directing secretion. Positions 24–44 (SPDPAAKAAPAAAAAPAAAAP) are cleaved as a propeptide — removed by a dipeptidylpeptidase. Arg-81 is subject to Arginine amide.

It belongs to the type-I AFP family. In terms of tissue distribution, detected in liver and in blood serum (at protein level).

It localises to the secreted. In terms of biological role, contributes to protect fish blood from freezing at subzero sea water temperatures. Lowers the blood freezing point. Binds to nascent ice crystals and prevents further growth. The chain is Ice-structuring protein A from Pseudopleuronectes americanus (Winter flounder).